Consider the following 436-residue polypeptide: Gamma-glutamyl phosphate reductase (436 aa).

It belongs to the gamma-glutamyl phosphate reductase family.

The protein localises to the cytoplasm. It carries out the reaction L-glutamate 5-semialdehyde + phosphate + NADP(+) = L-glutamyl 5-phosphate + NADPH + H(+). The protein operates within amino-acid biosynthesis; L-proline biosynthesis; L-glutamate 5-semialdehyde from L-glutamate: step 2/2. In terms of biological role, catalyzes the NADPH-dependent reduction of L-glutamate 5-phosphate into L-glutamate 5-semialdehyde and phosphate. The product spontaneously undergoes cyclization to form 1-pyrroline-5-carboxylate. This chain is Gamma-glutamyl phosphate reductase, found in Prochlorococcus marinus (strain MIT 9301).